Here is a 297-residue protein sequence, read N- to C-terminus: Homoserine kinase (297 aa).

82–92 lines the ATP pocket; sequence PLTRGLGSSAS.

Belongs to the GHMP kinase family. Homoserine kinase subfamily.

It localises to the cytoplasm. The catalysed reaction is L-homoserine + ATP = O-phospho-L-homoserine + ADP + H(+). Its pathway is amino-acid biosynthesis; L-threonine biosynthesis; L-threonine from L-aspartate: step 4/5. Catalyzes the ATP-dependent phosphorylation of L-homoserine to L-homoserine phosphate. This chain is Homoserine kinase, found in Bacillus cereus (strain AH187).